The chain runs to 438 residues: 26S proteasome regulatory subunit 7 homolog (438 aa).

The segment covering 1 to 15 (MPPKEDWEKYQKPVD) has biased composition (basic and acidic residues). The interval 1 to 31 (MPPKEDWEKYQKPVDTEEENDKNPPPLDEGD) is disordered. A Phosphoserine modification is found at S90. 220–227 (GPPGTGKT) contacts ATP.

Belongs to the AAA ATPase family.

It localises to the cytoplasm. Its subcellular location is the nucleus. In terms of biological role, the 26S proteasome is involved in the ATP-dependent degradation of ubiquitinated proteins. The regulatory (or ATPase) complex confers ATP dependency and substrate specificity to the 26S complex. The protein is 26S proteasome regulatory subunit 7 homolog (rpt1) of Schizosaccharomyces pombe (strain 972 / ATCC 24843) (Fission yeast).